The chain runs to 433 residues: CinA-like protein (433 aa).

Belongs to the CinA family.

The protein is CinA-like protein of Prochlorococcus marinus (strain MIT 9515).